The following is a 247-amino-acid chain: T-cell surface glycoprotein CD8 alpha chain (247 aa).

A signal peptide spans 1 to 27 (MASPLTRFLSLNLLLLGESIILGSGEA). The Ig-like V-type domain maps to 28–139 (KPQAPELRIF…SVISNSVMYF (112 aa)). Over 28–196 (KPQAPELRIF…TGLDFACDIY (169 aa)) the chain is Extracellular. Cys53 and Cys129 are oxidised to a cystine. N-linked (GlcNAc...) asparagine glycosylation is found at Asn69, Asn97, and Asn150. Positions 156–182 (PVLRTPSPVHPTGTSQPQRPEDCRPRG) are disordered. Residues 197 to 217 (IWAPLAGICVALLLSLIITLI) traverse the membrane as a helical segment. Topologically, residues 218-247 (CYHRSRKRVCKCPRPLVRQEGKPRPSEKIV) are cytoplasmic.

In terms of assembly, forms disulfide-linked heterodimers with CD8B at the cell surface. Also forms homodimers in several cell types including NK-cells or peripheral blood T-lymphocytes. Interacts with the MHC class I HLA-A/B2M dimer. Interacts with LCK in a zinc-dependent manner. Post-translationally, palmitoylated, but association with CD8B seems to be more important for the enrichment of CdD8A in lipid rafts. Phosphorylated in cytotoxic T-lymphocytes (CTLs) following activation.

It localises to the cell membrane. Its function is as follows. Integral membrane glycoprotein that plays an essential role in the immune response and serves multiple functions in responses against both external and internal offenses. In T-cells, functions primarily as a coreceptor for MHC class I molecule:peptide complex. The antigens presented by class I peptides are derived from cytosolic proteins while class II derived from extracellular proteins. Interacts simultaneously with the T-cell receptor (TCR) and the MHC class I proteins presented by antigen presenting cells (APCs). In turn, recruits the Src kinase LCK to the vicinity of the TCR-CD3 complex. LCK then initiates different intracellular signaling pathways by phosphorylating various substrates ultimately leading to lymphokine production, motility, adhesion and activation of cytotoxic T-lymphocytes (CTLs). This mechanism enables CTLs to recognize and eliminate infected cells and tumor cells. In NK-cells, the presence of CD8A homodimers at the cell surface provides a survival mechanism allowing conjugation and lysis of multiple target cells. CD8A homodimer molecules also promote the survival and differentiation of activated lymphocytes into memory CD8 T-cells. In Mus musculus (Mouse), this protein is T-cell surface glycoprotein CD8 alpha chain (Cd8a).